Consider the following 189-residue polypeptide: GTP cyclohydrolase 1 (189 aa).

Zn(2+) contacts are provided by Cys79, His82, and Cys150.

Belongs to the GTP cyclohydrolase I family. As to quaternary structure, homomer.

It carries out the reaction GTP + H2O = 7,8-dihydroneopterin 3'-triphosphate + formate + H(+). It participates in cofactor biosynthesis; 7,8-dihydroneopterin triphosphate biosynthesis; 7,8-dihydroneopterin triphosphate from GTP: step 1/1. The sequence is that of GTP cyclohydrolase 1 from Rickettsia africae (strain ESF-5).